Here is a 448-residue protein sequence, read N- to C-terminus: Adenylyltransferase and sulfurtransferase UBA4 (448 aa).

ATP-binding positions include Gly88, Asp109, 116 to 120 (SNLHR), Lys133, and 177 to 178 (DT). Positions 219 and 222 each coordinate Zn(2+). Cys236 serves as the catalytic Glycyl thioester intermediate; for adenylyltransferase activity. Zn(2+) contacts are provided by Cys297 and Cys300. Residues 349 to 446 (QGENSILIDV…WSKEIDSKIP (98 aa)) form the Rhodanese domain. Catalysis depends on Cys405, which acts as the Cysteine persulfide intermediate; for sulfurtransferase activity.

It in the N-terminal section; belongs to the HesA/MoeB/ThiF family. UBA4 subfamily. It depends on Zn(2+) as a cofactor.

It is found in the cytoplasm. The protein localises to the cytosol. It functions in the pathway tRNA modification; 5-methoxycarbonylmethyl-2-thiouridine-tRNA biosynthesis. In terms of biological role, plays a central role in 2-thiolation of mcm(5)S(2)U at tRNA wobble positions of cytosolic tRNA(Lys), tRNA(Glu) and tRNA(Gln). Acts by mediating the C-terminal thiocarboxylation of sulfur carrier URM1. Its N-terminus first activates URM1 as acyl-adenylate (-COAMP), then the persulfide sulfur on the catalytic cysteine is transferred to URM1 to form thiocarboxylation (-COSH) of its C-terminus. The reaction probably involves hydrogen sulfide that is generated from the persulfide intermediate and that acts as a nucleophile towards URM1. Subsequently, a transient disulfide bond is formed. Does not use thiosulfate as sulfur donor; NFS1 probably acting as a sulfur donor for thiocarboxylation reactions. Prior mcm(5) tRNA modification by the elongator complex is required for 2-thiolation. May also be involved in protein urmylation. The sequence is that of Adenylyltransferase and sulfurtransferase UBA4 from Debaryomyces hansenii (strain ATCC 36239 / CBS 767 / BCRC 21394 / JCM 1990 / NBRC 0083 / IGC 2968) (Yeast).